Consider the following 398-residue polypeptide: Cation channel sperm-associated protein 3 (398 aa).

The Cytoplasmic portion of the chain corresponds to 1 to 48; that stretch reads MSQHRHQRHSRVISSSPVDTTSVGFCPTFKKFKRNDDECRAFVKRVIM. Residues 49–71 form a helical membrane-spanning segment; the sequence is SRFFKIIMISTVTSNAFFMALWT. At 72 to 80 the chain is on the extracellular side; it reads SYDIRYRLF. Residues 81 to 107 form a helical membrane-spanning segment; it reads RLLEFSEIFFVSICTSELSMKVYVDPI. Residue N108 is a topological domain, cytoplasmic. A helical transmembrane segment spans residues 109-131; sequence YWKNGYNLLDVIIIIVMFLPYAL. Topologically, residues 132 to 143 are extracellular; that stretch reads RQLMGKQFTYLY. Residues 144–160 form a helical membrane-spanning segment; it reads IADGMQSLRILKLIGYS. Over 161-168 the chain is Cytoplasmic; the sequence is QGIRTLIT. A helical transmembrane segment spans residues 169–195; sequence AVGQTVYTVASVLLLLFLLMYIFAILG. The Extracellular portion of the chain corresponds to 196–216; it reads FCLFGSPDNGDHDNWGNLAAA. Positions 217 to 236 form an intramembrane region, helical; Pore-forming; that stretch reads FFTLFSLATVDGWTDLQKQL. The Extracellular portion of the chain corresponds to 237–242; that stretch reads DNREFA. Residues 243-268 form a helical membrane-spanning segment; that stretch reads LSRAFTIIFILLASFIFLNMFVGVMI. Residues 269 to 398 lie on the Cytoplasmic side of the membrane; it reads MHTEDSIRKF…PQSLEKVDEK (130 aa).

The protein belongs to the cation channel sperm-associated (TC 1.A.1.19) family. In terms of assembly, component of the CatSper complex or CatSpermasome composed of the core pore-forming members CATSPER1, CATSPER2, CATSPER3 and CATSPER4 as well as auxiliary members CATSPERB, CATSPERG, CATSPERD, CATSPERE, CATSPERZ, C2CD6/CATSPERT, TMEM249, TMEM262 and EFCAB9. HSPA1 may be an additional auxiliary complex member. The core complex members CATSPER1, CATSPER2, CATSPER3 and CATSPER4 form a heterotetrameric channel. The auxiliary CATSPERB, CATSPERG, CATSPERD and CATSPERE subunits form a pavilion-like structure over the pore which stabilizes the complex through interactions with CATSPER4, CATSPER3, CATSPER1 and CATSPER2 respectively. TMEM262/CATSPERH interacts with CATSPERB, further stabilizing the complex. C2CD6/CATSPERT interacts at least with CATSPERD and is required for targeting the CatSper complex in the flagellar membrane. As to expression, testis-specific.

It localises to the cell projection. The protein resides in the cilium. The protein localises to the flagellum membrane. The catalysed reaction is Ca(2+)(in) = Ca(2+)(out). The CatSper calcium channel is indirectly activated by extracellular progesterone and prostaglandins following the sequence: progesterone &gt; PGF1-alpha = PGE1 &gt; PGA1 &gt; PGE2 &gt;&gt; PGD2. The CatSper calcium channel is directly inhibited by endocannabinoid 2-arachidonoylglycerol (2AG). Indirect activation by progesterone takes place via the following mechanism: progesterone binds and activates the acylglycerol lipase ABHD2, which in turn mediates hydrolysis of 2AG inhibitor, relieving inhibition of the CatSper channel. The primary effect of progesterone activation is to shift voltage dependence towards more physiological, negative membrane potentials; it is not mediated by metabotropic receptors and second messengers. Sperm capacitation enhances the effect of progesterone by providing additional negative shift. Also activated by the elevation of intracellular pH. Pore-forming subunit of the CatSper complex, a sperm-specific voltage-gated calcium channel that plays a central role in calcium-dependent physiological responses essential for successful fertilization, such as sperm hyperactivation, acrosome reaction and chemotaxis towards the oocyte. The protein is Cation channel sperm-associated protein 3 (CATSPER3) of Homo sapiens (Human).